A 380-amino-acid chain; its full sequence is Putative 8-amino-7-oxononanoate synthase (380 aa).

A substrate-binding site is contributed by R18. A pyridoxal 5'-phosphate-binding site is contributed by 106 to 107 (GY). H131 is a substrate binding site. Pyridoxal 5'-phosphate-binding positions include S179, 205-208 (DEAH), and 236-239 (TFGK). An N6-(pyridoxal phosphate)lysine modification is found at K239. T352 contributes to the substrate binding site.

The protein belongs to the class-II pyridoxal-phosphate-dependent aminotransferase family. BioF subfamily. Homodimer. Pyridoxal 5'-phosphate is required as a cofactor.

It carries out the reaction 6-carboxyhexanoyl-[ACP] + L-alanine + H(+) = (8S)-8-amino-7-oxononanoate + holo-[ACP] + CO2. The protein operates within cofactor biosynthesis; biotin biosynthesis. Catalyzes the decarboxylative condensation of pimeloyl-[acyl-carrier protein] and L-alanine to produce 8-amino-7-oxononanoate (AON), [acyl-carrier protein], and carbon dioxide. This chain is Putative 8-amino-7-oxononanoate synthase (bioF), found in Haemophilus influenzae (strain ATCC 51907 / DSM 11121 / KW20 / Rd).